We begin with the raw amino-acid sequence, 533 residues long: Frizzled/smoothened-like sans CRD protein H (533 aa).

A signal peptide spans Met-1–Ala-21. Topologically, residues Ser-22–Ser-103 are extracellular. N-linked (GlcNAc...) asparagine glycosylation is present at Asn-76. A helical transmembrane segment spans residues Leu-104–Leu-124. Topologically, residues Met-125 to Thr-134 are cytoplasmic. The helical transmembrane segment at Ile-135–Leu-155 threads the bilayer. Topologically, residues Lys-156–Cys-177 are extracellular. Residues Leu-178 to Leu-198 form a helical membrane-spanning segment. The Cytoplasmic portion of the chain corresponds to Ser-199–Asp-216. Residues Leu-217–Ser-237 form a helical membrane-spanning segment. Residues Lys-238–Gly-259 lie on the Extracellular side of the membrane. A helical transmembrane segment spans residues Cys-260–Leu-280. Over Tyr-281–Pro-302 the chain is Cytoplasmic. A helical transmembrane segment spans residues Leu-303–Leu-323. Topologically, residues Ala-324 to Lys-360 are extracellular. Residues Leu-361 to Phe-381 form a helical membrane-spanning segment. The Cytoplasmic portion of the chain corresponds to Tyr-382–Val-533. The disordered stretch occupies residues Ile-454–Val-533. A compositionally biased stretch (low complexity) spans Asn-466–Asn-518. Positions Asn-501–Asn-528 form a coiled coil. The span at Thr-519 to Val-533 shows a compositional bias: polar residues.

The protein belongs to the G-protein coupled receptor Fz/Smo family.

It is found in the membrane. This Dictyostelium discoideum (Social amoeba) protein is Frizzled/smoothened-like sans CRD protein H (fscH).